We begin with the raw amino-acid sequence, 421 residues long: ATP-dependent RNA helicase RhlB (421 aa).

The Q motif motif lies at 9 to 37 (QKFSDFALHPQVVEALEKKGFYNCTPIQA). The Helicase ATP-binding domain maps to 40–219 (LPLTLAGRDV…FEQMNNAEYV (180 aa)). 53 to 60 (AQTGTGKT) contacts ATP. A DEAD box motif is present at residues 165-168 (DEAD). A Helicase C-terminal domain is found at 245–390 (RLLQTLIEEE…VSKYNPEALM (146 aa)). The disordered stretch occupies residues 396-421 (PLRLTRSRPGNGPRRAGAPRNRRRSG). Over residues 402–414 (SRPGNGPRRAGAP) the composition is skewed to low complexity.

Belongs to the DEAD box helicase family. RhlB subfamily. In terms of assembly, component of the RNA degradosome, which is a multiprotein complex involved in RNA processing and mRNA degradation.

The protein localises to the cytoplasm. It catalyses the reaction ATP + H2O = ADP + phosphate + H(+). Functionally, DEAD-box RNA helicase involved in RNA degradation. Has RNA-dependent ATPase activity and unwinds double-stranded RNA. In Salmonella arizonae (strain ATCC BAA-731 / CDC346-86 / RSK2980), this protein is ATP-dependent RNA helicase RhlB.